A 975-amino-acid chain; its full sequence is Glycine dehydrogenase (decarboxylating) (975 aa).

Residue Lys-723 is modified to N6-(pyridoxal phosphate)lysine.

The protein belongs to the GcvP family. As to quaternary structure, the glycine cleavage system is composed of four proteins: P, T, L and H. It depends on pyridoxal 5'-phosphate as a cofactor.

The catalysed reaction is N(6)-[(R)-lipoyl]-L-lysyl-[glycine-cleavage complex H protein] + glycine + H(+) = N(6)-[(R)-S(8)-aminomethyldihydrolipoyl]-L-lysyl-[glycine-cleavage complex H protein] + CO2. In terms of biological role, the glycine cleavage system catalyzes the degradation of glycine. The P protein binds the alpha-amino group of glycine through its pyridoxal phosphate cofactor; CO(2) is released and the remaining methylamine moiety is then transferred to the lipoamide cofactor of the H protein. The chain is Glycine dehydrogenase (decarboxylating) from Burkholderia thailandensis (strain ATCC 700388 / DSM 13276 / CCUG 48851 / CIP 106301 / E264).